We begin with the raw amino-acid sequence, 418 residues long: Actin-related protein 3 (418 aa).

Position 1 is an N-acetylmethionine (Met1).

Belongs to the actin family. ARP3 subfamily. As to quaternary structure, component of the Arp2/3 complex composed of arpB/Arp2, arpC/Arp3, arcA/p41-arc, arcB/p34-arc, arcC/p21-arc, arcD/p20-arc and arcE/p16-arc. Interacts with carmil (via the region between the LRR domain and COOH-terminal proline-rich domain); carmil is required for Arp2/3-dependent actin nucleation. Arp2/3 complex, MyoB, MyoC, and the alpha and beta subunits of capping protein all form a larger complex with carmil.

It is found in the cytoplasm. The protein resides in the cytoskeleton. Its subcellular location is the cytosol. The protein localises to the cell cortex. It localises to the cell projection. It is found in the pseudopodium. In terms of biological role, functions as ATP-binding component of the Arp2/3 complex which is involved in regulation of actin polymerization and together with an activating nucleation-promoting factor (NPF) mediates the formation of branched actin networks. Seems to contact the pointed end of the daughter actin filament. The Arp2/3 complex is involved in organizing the actin system in cell motility and chemotaxis, in phagocytosis and macropinocytosis, at late steps of endosome processing, and in mitosis. In concert with a group of other proteins, the Arp2/3 complex plays a general role in the rapid activation and adaptation of the actin system to its multiple functions. In Dictyostelium discoideum (Social amoeba), this protein is Actin-related protein 3 (arpC).